Reading from the N-terminus, the 299-residue chain is Porphobilinogen deaminase (299 aa).

S-(dipyrrolylmethanemethyl)cysteine is present on Cys-242.

The protein belongs to the HMBS family. Monomer. It depends on dipyrromethane as a cofactor.

The catalysed reaction is 4 porphobilinogen + H2O = hydroxymethylbilane + 4 NH4(+). It participates in porphyrin-containing compound metabolism; protoporphyrin-IX biosynthesis; coproporphyrinogen-III from 5-aminolevulinate: step 2/4. Its function is as follows. Tetrapolymerization of the monopyrrole PBG into the hydroxymethylbilane pre-uroporphyrinogen in several discrete steps. This is Porphobilinogen deaminase (hemC) from Rickettsia prowazekii (strain Madrid E).